A 50-amino-acid chain; its full sequence is MAGLLRFLLSKGRALYNWAKSHVGKVWEWLKSGATYEQIKEWIENALGWR.

The residue at position 1 (Met-1) is an N-formylmethionine.

The protein localises to the secreted. Its function is as follows. Has bacteriolytic activity against Gram-positive bacteria B.subtilis, L.lactis and M.luteus and several species from genus Staphylococcus including methicillin-resistant S.aureus, with MIC values ranging from 0.11 uM to 7.8 uM. Has no activity against Gram-negative bacteria or fungi. In vitro, has a dose-dependent cytolytic effect on eukaryotic cells. This chain is Bacteriocin BacSp222, found in Staphylococcus pseudintermedius.